The following is a 110-amino-acid chain: Large ribosomal subunit protein uL22 (110 aa).

The protein belongs to the universal ribosomal protein uL22 family. In terms of assembly, part of the 50S ribosomal subunit.

This protein binds specifically to 23S rRNA; its binding is stimulated by other ribosomal proteins, e.g. L4, L17, and L20. It is important during the early stages of 50S assembly. It makes multiple contacts with different domains of the 23S rRNA in the assembled 50S subunit and ribosome. Functionally, the globular domain of the protein is located near the polypeptide exit tunnel on the outside of the subunit, while an extended beta-hairpin is found that lines the wall of the exit tunnel in the center of the 70S ribosome. The sequence is that of Large ribosomal subunit protein uL22 from Aliarcobacter butzleri (strain RM4018) (Arcobacter butzleri).